The following is a 596-amino-acid chain: Probable lysosomal cobalamin transporter (596 aa).

10 consecutive transmembrane segments (helical) span residues 13-33 (IWVA…ITTF), 45-65 (VSIV…LLPV), 99-119 (VVYY…IPFA), 150-170 (LGFV…PAAG), 201-221 (LLIT…LALL), 318-338 (LLGG…MLIT), 353-373 (GYIL…VQSA), 381-401 (ILMA…IATI), 425-445 (IATV…AMIV), and 512-532 (VFGA…MVVF). The N-linked (GlcNAc...) asparagine glycan is linked to Asn543. A disordered region spans residues 576-596 (GRAKNRNGYGTGGGEGSNGRG). A compositionally biased stretch (gly residues) spans 584-596 (YGTGGGEGSNGRG).

It belongs to the LIMR family. LMBRD1 subfamily.

It localises to the lysosome membrane. In terms of biological role, probable lysosomal cobalamin transporter. Required to export cobalamin from lysosomes allowing its conversion to cofactors. The sequence is that of Probable lysosomal cobalamin transporter from Podospora anserina (strain S / ATCC MYA-4624 / DSM 980 / FGSC 10383) (Pleurage anserina).